Consider the following 399-residue polypeptide: uncharacterized protein (399 aa).

The Cytoplasmic segment spans residues 1 to 8; that stretch reads MHNLQVRR. A helical membrane pass occupies residues 9 to 35; that stretch reads HYAALKGFYLFAFLGTGSIIPLLSMYL. Residues 36 to 42 are Extracellular-facing; sequence TKEQHLS. Residues 43-71 traverse the membrane as a helical segment; sequence GSQVGLIMSLGPIVMIFFQPFWGMLSDYT. Topologically, residues 72–75 are cytoplasmic; the sequence is QKTK. Residues 76 to 101 traverse the membrane as a helical segment; that stretch reads GLLAVCTSITGIIGLAYIAFDSFPLF. Residues 102 to 105 lie on the Extracellular side of the membrane; sequence ILIA. The helical transmembrane segment at 106-123 threads the bilayer; sequence ACFAAFQSTIIPLSDSIS. The Cytoplasmic portion of the chain corresponds to 124-134; sequence LRYTQETNGNY. A helical transmembrane segment spans residues 135-157; it reads GGIRLFGSLGFGVAVFAMGQVTN. At 158-160 the chain is on the extracellular side; it reads QLY. Residues 161-180 traverse the membrane as a helical segment; the sequence is PIHVIFIFGCAFLCIAAILA. Residues 181–210 are Cytoplasmic-facing; the sequence is SQVPGQQKTTKVNIRKGFRELISNKTFLIF. A helical membrane pass occupies residues 211–230; that stretch reads MIITFTTFAPNLANNTYFSL. Residues 231 to 234 lie on the Extracellular side of the membrane; that stretch reads FLDK. The helical transmembrane segment at 235–259 threads the bilayer; sequence SGASLSAIGILFFIGVISEIPFMRF. Topologically, residues 260 to 269 are cytoplasmic; it reads AQTFIDKMGL. A helical transmembrane segment spans residues 270-289; that stretch reads LNVIMLSGGVSLFRWALYFT. Over 290 to 292 the chain is Extracellular; the sequence is APS. A helical transmembrane segment spans residues 293-315; the sequence is LWIIYATVFLQGVAIGLFIPAAL. The Cytoplasmic segment spans residues 316-327; the sequence is QYVKKITPRHVE. Residues 328-355 form a helical membrane-spanning segment; the sequence is ATALTMYAAIGNGFGNWFCTFAGGYIFD. Topologically, residues 356–358 are extracellular; it reads YVS. The chain crosses the membrane as a helical span at residues 359–379; the sequence is IFAVYLLFGILSIAGFGLTLY. The Cytoplasmic segment spans residues 380–399; the sequence is LMKAEKNKHTLHQPAVTFKP.

This sequence belongs to the major facilitator superfamily.

It is found in the cell membrane. This is an uncharacterized protein from Bacillus subtilis (strain 168).